Consider the following 345-residue polypeptide: Beta-2-glycoprotein 1 (345 aa).

The first 19 residues, 1–19 (MISPVLILFSSFLCHVAIA), serve as a signal peptide directing secretion. Sushi domains follow at residues 21–81 (RTCP…KCTP), 82–139 (RVCP…VCAP), 140–202 (IICP…ECRE), and 203–262 (VKCP…SCKA). Cystine bridges form between Cys-23/Cys-66, Cys-51/Cys-79, Cys-84/Cys-124, Cys-110/Cys-137, Cys-142/Cys-188, Cys-174/Cys-200, Cys-205/Cys-248, Cys-234/Cys-260, Cys-264/Cys-315, Cys-300/Cys-325, and Cys-307/Cys-345. O-linked (GalNAc...) threonine glycosylation occurs at Thr-33. Thr-149 is a glycosylation site (O-linked (GalNAc...) threonine). Asn-162 is a glycosylation site (N-linked (GlcNAc...) (complex) asparagine). Residues Asn-183 and Asn-193 are each glycosylated (N-linked (GlcNAc...) asparagine). N-linked (GlcNAc...) asparagine glycosylation is present at Asn-253. The interval 263-345 (SCKVPVKKAT…KTDASDVKPC (83 aa)) is sushi-like.

N- and O-glycosylated. PubMed:6587378 also reports glycosylation on 'Asn-188' for their allele. As to expression, expressed by the liver and secreted in plasma.

Its subcellular location is the secreted. Binds to various kinds of negatively charged substances such as heparin, phospholipids, and dextran sulfate. May prevent activation of the intrinsic blood coagulation cascade by binding to phospholipids on the surface of damaged cells. This Homo sapiens (Human) protein is Beta-2-glycoprotein 1 (APOH).